Reading from the N-terminus, the 454-residue chain is NADP-specific glutamate dehydrogenase 1 (454 aa).

Residue K110 is part of the active site. NAD(+) is bound at residue 174–203 (GVLTGKGLNWGGSLIRPEATGYGLVYYTQA).

Belongs to the Glu/Leu/Phe/Val dehydrogenases family. Homohexamer.

The catalysed reaction is L-glutamate + NADP(+) + H2O = 2-oxoglutarate + NH4(+) + NADPH + H(+). This is NADP-specific glutamate dehydrogenase 1 (GDH1) from Saccharomyces uvarum (strain ATCC 76518 / CBS 7001 / CLIB 283 / NBRC 10550 / MCYC 623 / NCYC 2669 / NRRL Y-11845) (Yeast).